We begin with the raw amino-acid sequence, 156 residues long: Small ribosomal subunit protein uS7 (156 aa).

This sequence belongs to the universal ribosomal protein uS7 family. As to quaternary structure, part of the 30S ribosomal subunit. Contacts proteins S9 and S11.

Its function is as follows. One of the primary rRNA binding proteins, it binds directly to 16S rRNA where it nucleates assembly of the head domain of the 30S subunit. Is located at the subunit interface close to the decoding center, probably blocks exit of the E-site tRNA. This Shewanella loihica (strain ATCC BAA-1088 / PV-4) protein is Small ribosomal subunit protein uS7.